The chain runs to 391 residues: Succinyl-diaminopimelate desuccinylase (391 aa).

Position 78 (His78) interacts with Zn(2+). Residue Asp80 is part of the active site. Zn(2+) is bound at residue Asp111. The active-site Proton acceptor is Glu145. The Zn(2+) site is built by Glu146, Glu174, and His360.

The protein belongs to the peptidase M20A family. DapE subfamily. As to quaternary structure, homodimer. The cofactor is Zn(2+). Co(2+) serves as cofactor.

The enzyme catalyses N-succinyl-(2S,6S)-2,6-diaminopimelate + H2O = (2S,6S)-2,6-diaminopimelate + succinate. It functions in the pathway amino-acid biosynthesis; L-lysine biosynthesis via DAP pathway; LL-2,6-diaminopimelate from (S)-tetrahydrodipicolinate (succinylase route): step 3/3. Its function is as follows. Catalyzes the hydrolysis of N-succinyl-L,L-diaminopimelic acid (SDAP), forming succinate and LL-2,6-diaminopimelate (DAP), an intermediate involved in the bacterial biosynthesis of lysine and meso-diaminopimelic acid, an essential component of bacterial cell walls. The protein is Succinyl-diaminopimelate desuccinylase of Acidovorax ebreus (strain TPSY) (Diaphorobacter sp. (strain TPSY)).